The sequence spans 908 residues: Glutamate receptor ionotropic, kainate 2 (908 aa).

Residues 1–31 (MQRIAGITKMVTHRRWLGLLLLLLCVGYSHG) form the signal peptide. The Extracellular segment spans residues 32-561 (MPHVLRFGGI…VFSFLNPLSP (530 aa)). Residues asparagine 67, asparagine 73, asparagine 275, asparagine 378, asparagine 412, asparagine 423, and asparagine 430 are each glycosylated (N-linked (GlcNAc...) asparagine). The cysteines at positions 96 and 347 are disulfide-linked. The L-glutamate site is built by proline 516, alanine 518, and arginine 523. Residue asparagine 546 is glycosylated (N-linked (GlcNAc...) asparagine). A helical membrane pass occupies residues 562–582 (DIWMYILLAYLGVSCVLFVIA). Topologically, residues 583–638 (RFSPYEWYNPHPCNPDSDVVENNFTLLNSFWFGVGALMQQGSELMPKALSTRIVGG) are cytoplasmic. Residues 639-659 (IWWFFTLIIISSYTANLAAFL) traverse the membrane as a helical segment. Residues 660–819 (TVERMESPID…KEASALGVQN (160 aa)) are Extracellular-facing. L-glutamate contacts are provided by serine 689, threonine 690, and glutamate 738. The cysteines at positions 750 and 804 are disulfide-linked. The N-linked (GlcNAc...) asparagine glycan is linked to asparagine 751. The helical transmembrane segment at 820-840 (IGGIFIVLAAGLVLSVFVAVG) threads the bilayer. The Cytoplasmic segment spans residues 841-908 (EFLYKSKQNA…RRLPGKETMA (68 aa)).

The protein belongs to the glutamate-gated ion channel (TC 1.A.10.1) family. GRIK2 subfamily. Homotetramer and heterotetramer with GRIK5. Tetramers may be formed by the dimerization of dimers.

Its subcellular location is the cell membrane. It is found in the postsynaptic cell membrane. The catalysed reaction is Ca(2+)(in) = Ca(2+)(out). The enzyme catalyses Na(+)(in) = Na(+)(out). Cold receptor activity activated by temperatures between 10-19 degrees Celsius. Functionally, ionotropic glutamate receptor that functions as a cation-permeable ligand-gated ion channel, gated by L-glutamate and the glutamatergic agonist kainic acid. L-glutamate acts as an excitatory neurotransmitter at many synapses in the central nervous system. Binding of the excitatory neurotransmitter L-glutamate induces a conformation change, leading to the opening of the cation channel, and thereby converts the chemical signal to an electrical impulse. The receptor then desensitizes rapidly and enters a transient inactive state, characterized by the presence of bound agonist. Independent of its ionotropic glutamate receptor activity, acts as a thermoreceptor conferring sensitivity to cold temperatures. Functions in dorsal root ganglion neurons. The polypeptide is Glutamate receptor ionotropic, kainate 2 (Danio rerio (Zebrafish)).